The primary structure comprises 85 residues: Large ribosomal subunit protein bL27 (85 aa).

Residues 1-21 (MAHKKAGGSTRNGRDSESKRL) are disordered.

Belongs to the bacterial ribosomal protein bL27 family.

This Pseudomonas putida (strain W619) protein is Large ribosomal subunit protein bL27.